A 998-amino-acid chain; its full sequence is Sensor histidine kinase AruS (998 aa).

3 disordered regions span residues 27–82, 154–198, and 224–245; these read ERRP…HARA, RQAG…LPAG, and RQHPALAGRQRARLSAPRRQPR. A compositionally biased stretch (low complexity) spans 40–49; that stretch reads GEAAVRRAGL. Basic residues predominate over residues 161–183; the sequence is HRLHRPRTTHRHAVRRAPGRRRE. The next 2 helical transmembrane spans lie at 264 to 284 and 395 to 415; these read VLLFSLCFTVLAGAVQLFFEY and ASLLWMGSFLCGLAVALSWLF. The HAMP domain maps to 417-473; that stretch reads SLVTRHLWRMSEFAGHIAEGDLQQPLRLDKVDRERDEIDAVAAALEDMRQALRTDRR. The 222-residue stretch at 513–734 folds into the Histidine kinase domain; it reads TMSHEIRTPL…TFWFEIELAL (222 aa). Histidine 516 bears the Phosphohistidine; by autocatalysis mark. The Response regulatory domain occupies 751 to 869; it reads EVLLVEDVAL…ELRRALGEVG (119 aa). Aspartate 800 is subject to 4-aspartylphosphate. Residues 894–987 enclose the HPt domain; that stretch reads GRHKLAGLLG…RDGAEALRRA (94 aa). Phosphohistidine is present on histidine 933.

In terms of processing, autophosphorylated. Activation may require a sequential transfer of a phosphate group from a His in the primary transmitter domain, to an Asp in the receiver domain and to a His in the secondary transmitter domain.

The protein localises to the cell membrane. It catalyses the reaction ATP + protein L-histidine = ADP + protein N-phospho-L-histidine.. The protein operates within amino-acid degradation; L-arginine degradation [regulation]. Functionally, member of the two-component regulatory system AruS/AruR, which is involved in the regulation of the arginine transaminase (ATA) pathway in response to exogeneous L-arginine. Probably functions as a sensor kinase that phosphorylates AruR. The polypeptide is Sensor histidine kinase AruS (aruS) (Pseudomonas aeruginosa (strain ATCC 15692 / DSM 22644 / CIP 104116 / JCM 14847 / LMG 12228 / 1C / PRS 101 / PAO1)).